The chain runs to 433 residues: Chaperone SurA (433 aa).

The first 24 residues, 1-24, serve as a signal peptide directing secretion; it reads MDGIKLLLSIIILYFYTYINCAIA. PpiC domains are found at residues 173-274 and 285-385; these read NTTF…KVHD and ITEV…QLQN.

Its subcellular location is the periplasm. It catalyses the reaction [protein]-peptidylproline (omega=180) = [protein]-peptidylproline (omega=0). Functionally, chaperone involved in the correct folding and assembly of outer membrane proteins. Recognizes specific patterns of aromatic residues and the orientation of their side chains, which are found more frequently in integral outer membrane proteins. May act in both early periplasmic and late outer membrane-associated steps of protein maturation. The chain is Chaperone SurA from Baumannia cicadellinicola subsp. Homalodisca coagulata.